A 355-amino-acid chain; its full sequence is MVGATAKDKAGSVENAISQIQKQFGKGSIMRLGEQALEAIPVISTGALSLDIALGVGGLPKGRMTEIYGPESSGKTTLALHVVAEAQKLGGIAAFIDAEHALDTAYAEKLGVNIDNLLVSQPDFGEQALEIAEILIRSGGVDIIVVDSVAALTPKAEIDGNVGDVHVGLQARLMSQAMRKFAGVLNRSNTVLIFINQIRMKIGVMFGSPETTTGGNALKFYCSERLDIRRIGAIKDGQEITGNRTRVKVVKNKVAPPFKIAEFDIIYGEGISKIGDMFDLAVGLDIIDKSGSWYSYKNERIGQGRENSKQFLMDTPAICHEIEEKVRSAYGLPDREETKREETAQIPDTEKTKDV.

Position 69-76 (69-76 (GPESSGKT)) interacts with ATP. The tract at residues 329 to 355 (AYGLPDREETKREETAQIPDTEKTKDV) is disordered.

The protein belongs to the RecA family.

It is found in the cytoplasm. Its function is as follows. Can catalyze the hydrolysis of ATP in the presence of single-stranded DNA, the ATP-dependent uptake of single-stranded DNA by duplex DNA, and the ATP-dependent hybridization of homologous single-stranded DNAs. It interacts with LexA causing its activation and leading to its autocatalytic cleavage. The polypeptide is Protein RecA (Desulfotalea psychrophila (strain LSv54 / DSM 12343)).